The following is a 388-amino-acid chain: Formate-dependent phosphoribosylglycinamide formyltransferase (388 aa).

Residues 20 to 21 (EL) and E80 contribute to the N(1)-(5-phospho-beta-D-ribosyl)glycinamide site. ATP contacts are provided by residues R112, K153, 158–163 (SSGKGQ), 193–196 (EEFI), and E201. The region spanning 117–306 (RLAFEKLGLR…EFEIHARAIL (190 aa)) is the ATP-grasp domain. Positions 265 and 277 each coordinate Mg(2+). N(1)-(5-phospho-beta-D-ribosyl)glycinamide is bound by residues D284, K352, and 359–360 (RR).

It belongs to the PurK/PurT family. In terms of assembly, homodimer.

It catalyses the reaction N(1)-(5-phospho-beta-D-ribosyl)glycinamide + formate + ATP = N(2)-formyl-N(1)-(5-phospho-beta-D-ribosyl)glycinamide + ADP + phosphate + H(+). The protein operates within purine metabolism; IMP biosynthesis via de novo pathway; N(2)-formyl-N(1)-(5-phospho-D-ribosyl)glycinamide from N(1)-(5-phospho-D-ribosyl)glycinamide (formate route): step 1/1. Functionally, involved in the de novo purine biosynthesis. Catalyzes the transfer of formate to 5-phospho-ribosyl-glycinamide (GAR), producing 5-phospho-ribosyl-N-formylglycinamide (FGAR). Formate is provided by PurU via hydrolysis of 10-formyl-tetrahydrofolate. The protein is Formate-dependent phosphoribosylglycinamide formyltransferase of Methanococcus maripaludis (strain C7 / ATCC BAA-1331).